Reading from the N-terminus, the 721-residue chain is Zinc-transporting ATPase (721 aa).

Residues 1-107 (MTQSSPLKTQ…HSHGAGEFNL (107 aa)) are Cytoplasmic-facing. The HMA domain occupies 8-74 (KTQQMQVGGM…RIAALGYTLA (67 aa)). The Zn(2+) site is built by Cys-19 and Cys-22. The interval 80-101 (VTLNGHKHPHSHREEGHSHSHG) is disordered. The helical transmembrane segment at 108-128 (KQELLPVLTAIALFTIAILFE) threads the bilayer. Topologically, residues 129-140 (QPLHNTPGQIAE) are extracellular. A helical transmembrane segment spans residues 141-160 (FAVIIPAYLLSGWTVLKTAG). Residues 161-167 (RNILRGQ) are Cytoplasmic-facing. Residues 168-187 (IFDENFLMTIATLGALAIHQ) form a helical membrane-spanning segment. Over 188–190 (LPE) the chain is Extracellular. Residues 191–210 (AVAVMLFFRVGELFQEYSVG) form a helical membrane-spanning segment. Residues 211-344 (RSRRSIKALL…ITQFARYYTP (134 aa)) lie on the Cytoplasmic side of the membrane. A helical transmembrane segment spans residues 345-363 (VIVFLSLAVALLPPLFIPG). Residues 364–369 (ADRADW) lie on the Extracellular side of the membrane. Residues 370 to 387 (VYRALVLLVISCPCGLVI) traverse the membrane as a helical segment. The Cytoplasmic segment spans residues 388-671 (SIPLGYFGGI…AIHVARKTRQ (284 aa)). The active-site 4-aspartylphosphate intermediate is Asp-425. 2 residues coordinate Mg(2+): Asp-618 and Asp-622. The chain crosses the membrane as a helical span at residues 672 to 693 (IVVQNIVLALGIKALFIALGTI). The Extracellular portion of the chain corresponds to 694–701 (GLATLWEA). A helical membrane pass occupies residues 702 to 717 (VFADVGVALLAILNAT). Residues 718-721 (RIAK) lie on the Cytoplasmic side of the membrane.

It belongs to the cation transport ATPase (P-type) (TC 3.A.3) family. Type IB subfamily.

The protein localises to the cell membrane. It carries out the reaction Zn(2+)(in) + ATP + H2O = Zn(2+)(out) + ADP + phosphate + H(+). In Synechocystis sp. (strain ATCC 27184 / PCC 6803 / Kazusa), this protein is Zinc-transporting ATPase (ziaA).